The sequence spans 209 residues: uncharacterized protein (209 aa).

This is an uncharacterized protein from Arabidopsis thaliana (Mouse-ear cress).